The primary structure comprises 377 residues: Protein-glutamate methylesterase/protein-glutamine glutaminase 1 (377 aa).

The 118-residue stretch at 4 to 121 (KVLVVDDSSF…ARNRDEAVTL (118 aa)) folds into the Response regulatory domain. 4-aspartylphosphate is present on Asp55. Residues 138–170 (RPAAPRPAPTTSIAASSSLSQERAAATSPLGNR) are disordered. Low complexity predominate over residues 146-157 (PTTSIAASSSLS). Positions 184-377 (SGKKYQLTAI…ERMLVEVGLA (194 aa)) constitute a CheB-type methylesterase domain. Catalysis depends on residues Ser196, His223, and Asp319.

Belongs to the CheB family. Post-translationally, phosphorylated by CheA. Phosphorylation of the N-terminal regulatory domain activates the methylesterase activity.

Its subcellular location is the cytoplasm. The catalysed reaction is [protein]-L-glutamate 5-O-methyl ester + H2O = L-glutamyl-[protein] + methanol + H(+). It catalyses the reaction L-glutaminyl-[protein] + H2O = L-glutamyl-[protein] + NH4(+). Involved in chemotaxis. Part of a chemotaxis signal transduction system that modulates chemotaxis in response to various stimuli. Catalyzes the demethylation of specific methylglutamate residues introduced into the chemoreceptors (methyl-accepting chemotaxis proteins or MCP) by CheR. Also mediates the irreversible deamidation of specific glutamine residues to glutamic acid. In Vibrio cholerae serotype O1 (strain ATCC 39315 / El Tor Inaba N16961), this protein is Protein-glutamate methylesterase/protein-glutamine glutaminase 1.